A 198-amino-acid polypeptide reads, in one-letter code: E3 ubiquitin-protein ligase rnf152 (198 aa).

The RING-type zinc-finger motif lies at 12–55; it reads CQICFNYFSQRRLPKLLHCQHTCCSVCLSQMRLSQREIRCPWCR. Residues 162–182 traverse the membrane as a helical segment; that stretch reads TGVCTVLLVAFILIFLLGIVL.

This sequence belongs to the RNF152 family.

The protein localises to the lysosome membrane. The enzyme catalyses S-ubiquitinyl-[E2 ubiquitin-conjugating enzyme]-L-cysteine + [acceptor protein]-L-lysine = [E2 ubiquitin-conjugating enzyme]-L-cysteine + N(6)-ubiquitinyl-[acceptor protein]-L-lysine.. It participates in protein modification; protein ubiquitination. E3 ubiquitin-protein ligase that acts as a negative regulator of mTORC1 signaling by mediating ubiquitination of RagA/RRAGA and RHEB. Catalyzes 'Lys-63'-linked polyubiquitination of RagA/RRAGA in response to amino acid starvation, thereby regulating mTORC1 signaling. Also mediates monoubiquitination of RHEB, promoting its association with the TSC-TBC complex and subsequent inhibition. Also mediates 'Lys-48'-linked polyubiquitination of target proteins and their subsequent targeting to the proteasome for degradation. The sequence is that of E3 ubiquitin-protein ligase rnf152 from Danio rerio (Zebrafish).